The primary structure comprises 414 residues: Tryptophan synthase beta chain (414 aa).

Residues 1-26 (MVSTFSRKDQNYKNDDLNQPSKEGRF) show a composition bias toward basic and acidic residues. The tract at residues 1–27 (MVSTFSRKDQNYKNDDLNQPSKEGRFG) is disordered. Lys109 carries the post-translational modification N6-(pyridoxal phosphate)lysine.

The protein belongs to the TrpB family. In terms of assembly, tetramer of two alpha and two beta chains. It depends on pyridoxal 5'-phosphate as a cofactor.

The catalysed reaction is (1S,2R)-1-C-(indol-3-yl)glycerol 3-phosphate + L-serine = D-glyceraldehyde 3-phosphate + L-tryptophan + H2O. It functions in the pathway amino-acid biosynthesis; L-tryptophan biosynthesis; L-tryptophan from chorismate: step 5/5. Its function is as follows. The beta subunit is responsible for the synthesis of L-tryptophan from indole and L-serine. This is Tryptophan synthase beta chain from Prochlorococcus marinus (strain MIT 9301).